A 364-amino-acid chain; its full sequence is Uroporphyrinogen decarboxylase (364 aa).

Residues 28 to 32 (RQAGR), F47, D78, Y158, T213, and H334 contribute to the substrate site.

Belongs to the uroporphyrinogen decarboxylase family. As to quaternary structure, homodimer.

It is found in the cytoplasm. It catalyses the reaction uroporphyrinogen III + 4 H(+) = coproporphyrinogen III + 4 CO2. The protein operates within porphyrin-containing compound metabolism; protoporphyrin-IX biosynthesis; coproporphyrinogen-III from 5-aminolevulinate: step 4/4. In terms of biological role, catalyzes the decarboxylation of four acetate groups of uroporphyrinogen-III to yield coproporphyrinogen-III. This is Uroporphyrinogen decarboxylase from Ralstonia nicotianae (strain ATCC BAA-1114 / GMI1000) (Ralstonia solanacearum).